The primary structure comprises 92 residues: Acylphosphatase (92 aa).

Residues 5-92 enclose the Acylphosphatase-like domain; that stretch reads GVTIYVYGRV…EDIADFIVRH (88 aa). Active-site residues include arginine 20 and asparagine 38.

This sequence belongs to the acylphosphatase family.

The catalysed reaction is an acyl phosphate + H2O = a carboxylate + phosphate + H(+). This is Acylphosphatase (acyP) from Photorhabdus laumondii subsp. laumondii (strain DSM 15139 / CIP 105565 / TT01) (Photorhabdus luminescens subsp. laumondii).